The primary structure comprises 554 residues: Phosphomethylpyrimidine synthase (554 aa).

Residues Asn188, Met217, Tyr246, His282, 302-304 (SRG), 343-346 (DGLR), and Glu382 contribute to the substrate site. His386 is a binding site for Zn(2+). Tyr409 provides a ligand contact to substrate. His450 contacts Zn(2+). The [4Fe-4S] cluster site is built by Cys530, Cys533, and Cys538.

Belongs to the ThiC family. As to quaternary structure, homodimer. The cofactor is [4Fe-4S] cluster.

It carries out the reaction 5-amino-1-(5-phospho-beta-D-ribosyl)imidazole + S-adenosyl-L-methionine = 4-amino-2-methyl-5-(phosphooxymethyl)pyrimidine + CO + 5'-deoxyadenosine + formate + L-methionine + 3 H(+). It functions in the pathway cofactor biosynthesis; thiamine diphosphate biosynthesis. Catalyzes the synthesis of the hydroxymethylpyrimidine phosphate (HMP-P) moiety of thiamine from aminoimidazole ribotide (AIR) in a radical S-adenosyl-L-methionine (SAM)-dependent reaction. This Coxiella burnetii (strain RSA 493 / Nine Mile phase I) protein is Phosphomethylpyrimidine synthase.